The following is a 207-amino-acid chain: Urease accessory protein UreG (207 aa).

16–23 contacts GTP; sequence GPVGSGKT.

It belongs to the SIMIBI class G3E GTPase family. UreG subfamily. In terms of assembly, homodimer. UreD, UreF and UreG form a complex that acts as a GTP-hydrolysis-dependent molecular chaperone, activating the urease apoprotein by helping to assemble the nickel containing metallocenter of UreC. The UreE protein probably delivers the nickel.

Its subcellular location is the cytoplasm. Functionally, facilitates the functional incorporation of the urease nickel metallocenter. This process requires GTP hydrolysis, probably effectuated by UreG. The chain is Urease accessory protein UreG from Blochmanniella pennsylvanica (strain BPEN).